The chain runs to 556 residues: MNRRLDNERVIRAPHGSDISAKSWLTEAPLRMLMNNLDPDVAEKPSELIVYGGIGRAARDWDSFDRIVASLRKLEADQTLVVQSGKPVGIFRTHPDAPRVLIANSNIVPHWATLDHFNALDRMGLMMYGQMTAGSWIYIGSQGIVQGTYETFVEVGRRHYHGDLAGKWILTAGLGGMGGAQPLAATMAGASMLAVECQPSRIEMRLRTGYLDRQAASLDEALALMAEAAVTKQAVSVGLLGNAAEIFPELVRRGVRPDIVTDQTSAHDPINGYLPKGWTLAEWEMKRASDPKAVEQASKTSMVGHVQAMLDFHAMGIPTLDYGNNIRQMAKDMGLANAFDFPGFVPAYIRPLFCRGIGPFRWAALSGDPEDIYKTDAKVKELLPDNKHLHNWLDMARQRIKFQGLPARICWVGLGDRHRLGLAFNEMVARGEVKAPIVIGRDHLDSGSVASPNRETEAMKDGSDAVSDWPLLNALLNCASGATWVSLHHGGGVGIGYSQHAGMVIVADGTPDAARRLERVLWNDPATGVMRHADAGYEDAIACADVNGLDLPSLAR.

NAD(+) is bound by residues 52 to 53 (GG), Gln-130, 176 to 178 (GMG), Glu-196, Arg-201, 242 to 243 (NA), 263 to 267 (QTSAH), 273 to 274 (YL), and Tyr-322. Residue Cys-410 is part of the active site. Gly-492 is an NAD(+) binding site.

It belongs to the urocanase family. Requires NAD(+) as cofactor.

Its subcellular location is the cytoplasm. The catalysed reaction is 4-imidazolone-5-propanoate = trans-urocanate + H2O. The protein operates within amino-acid degradation; L-histidine degradation into L-glutamate; N-formimidoyl-L-glutamate from L-histidine: step 2/3. Functionally, catalyzes the conversion of urocanate to 4-imidazolone-5-propionate. The polypeptide is Urocanate hydratase (Bradyrhizobium sp. (strain BTAi1 / ATCC BAA-1182)).